A 277-amino-acid chain; its full sequence is F420-dependent methylenetetrahydromethanopterin dehydrogenase (277 aa).

The disordered stretch occupies residues 249 to 277; the sequence is EKATDSVSRKPHGADGKRLNKTKLMEKPE.

Belongs to the MTD family.

It catalyses the reaction 5,10-methylenetetrahydromethanopterin + oxidized coenzyme F420-(gamma-L-Glu)(n) + 2 H(+) = 5,10-methenyl-5,6,7,8-tetrahydromethanopterin + reduced coenzyme F420-(gamma-L-Glu)(n). It participates in one-carbon metabolism; methanogenesis from CO(2); 5,10-methylene-5,6,7,8-tetrahydromethanopterin from 5,10-methenyl-5,6,7,8-tetrahydromethanopterin (coenzyme F420 route): step 1/1. Functionally, catalyzes the reversible reduction of methenyl-H(4)MPT(+) to methylene-H(4)MPT. The chain is F420-dependent methylenetetrahydromethanopterin dehydrogenase from Methanococcus aeolicus (strain ATCC BAA-1280 / DSM 17508 / OCM 812 / Nankai-3).